The primary structure comprises 157 residues: Probable succinate transporter subunit YjjB (157 aa).

Transmembrane regions (helical) follow at residues 8–28, 50–70, 87–107, and 129–149; these read LALAQDMILAAIPAVGFAMVF, MILMTSGLNIEWSTFMASMLG, VFTVAAVIPMFPGISAYTAMI, and FLTASSIVGALSIGLSIPGLW.

It belongs to the ThrE exporter (TC 2.A.79) family. The transporter is composed of YjjB and YjjP.

The protein resides in the cell inner membrane. In terms of biological role, involved in succinate export with YjjP. Both proteins are required for export. The polypeptide is Probable succinate transporter subunit YjjB (Escherichia coli O157:H7 (strain EC4115 / EHEC)).